A 111-amino-acid chain; its full sequence is BET1-like protein (111 aa).

Residues M1–K86 are Cytoplasmic-facing. Phosphoserine is present on residues S9 and S37. Positions D15–M77 constitute a t-SNARE coiled-coil homology domain. Residues L87–S107 traverse the membrane as a helical; Anchor for type IV membrane protein segment. Over R108 to T111 the chain is Lumenal.

In terms of assembly, component of a SNARE complex consisting of STX5, YKT6, GOSR1 and BET1L. Interacts with STX5.

It localises to the golgi apparatus membrane. The protein localises to the golgi apparatus. Its subcellular location is the trans-Golgi network membrane. Vesicle SNARE required for targeting and fusion of retrograde transport vesicles with the Golgi complex. Required for the integrity of the Golgi complex. This is BET1-like protein from Mus musculus (Mouse).